The chain runs to 275 residues: Centromere protein V (275 aa).

Composition is skewed to low complexity over residues methionine 1–alanine 10 and arginine 17–serine 51. The tract at residues methionine 1–leucine 109 is disordered. Phosphoserine is present on residues serine 18 and serine 21. Arginine 43 is subject to Omega-N-methylarginine. Positions glycine 79–alanine 100 are enriched in pro residues. Phosphothreonine occurs at positions 98, 101, and 103. In terms of domain architecture, CENP-V/GFA spans histidine 148–glutamate 260. Zn(2+) is bound by residues cysteine 152, cysteine 154, cysteine 172, cysteine 174, cysteine 177, cysteine 216, and cysteine 219. Serine 257 carries the phosphoserine modification.

This sequence belongs to the Gfa family. It depends on Zn(2+) as a cofactor.

It is found in the chromosome. It localises to the centromere. The protein localises to the kinetochore. The protein resides in the nucleus. Its subcellular location is the cytoplasm. It is found in the cytoskeleton. It localises to the spindle. Its function is as follows. Required for distribution of pericentromeric heterochromatin in interphase nuclei and for centromere formation and organization, chromosome alignment and cytokinesis. The sequence is that of Centromere protein V (CENPV) from Homo sapiens (Human).